The primary structure comprises 327 residues: Leucotoxin LukDv (327 aa).

The N-terminal stretch at 1–26 (MKMKKLVKSSVASSIALLLLSNTVDA) is a signal peptide.

This sequence belongs to the aerolysin family. In terms of assembly, toxicity requires sequential binding and synergistic association of a class S and a class F component which form heterooligomeric complexes. LukEv (class S) associates with LukDv (class F).

It is found in the secreted. Functionally, part of a bi-component leucotoxin that acts by forming pores in the membrane of the target cells. The activity of LukEv-LukDv to rabbit leukocytes is similar to that of the Panton-Valentine leucocidin (PVL). LukEv-LukDv is hemolytic to rabbit red blood cells although the activity is only 8% of gamma-hemolysin. The polypeptide is Leucotoxin LukDv (lukDv) (Staphylococcus aureus (strain NCTC 8325 / PS 47)).